The primary structure comprises 499 residues: Cytochrome P450 81Q32 (499 aa).

A helical membrane pass occupies residues 5-25 (TLLYTFLAVVLLSISLKLFPV). N-linked (GlcNAc...) asparagine glycosylation is found at Asn-112, Asn-183, and Asn-266. Cys-434 lines the heme pocket.

Belongs to the cytochrome P450 family. Expressed in leaf epidermis and in the leaf internal phloem-associated parenchyma (IPAP) inside the mesophyll.

It is found in the membrane. The sequence is that of Cytochrome P450 81Q32 from Catharanthus roseus (Madagascar periwinkle).